Here is a 258-residue protein sequence, read N- to C-terminus: Protein STAY-GREEN LIKE, chloroplastic (258 aa).

This sequence belongs to the staygreen family. In terms of tissue distribution, strongly expressed in leaves, stems and panicles, and at lower levels in roots and seeds.

Functionally, promotes chlorophyll degradation in leaves. May be involved in LHCI proteins degradation, regulating the balance between LHCI and LHCII. This is Protein STAY-GREEN LIKE, chloroplastic from Oryza sativa subsp. japonica (Rice).